The following is a 255-amino-acid chain: Imidazole glycerol phosphate synthase subunit HisF (255 aa).

Catalysis depends on residues Asp-12 and Asp-131.

The protein belongs to the HisA/HisF family. Heterodimer of HisH and HisF.

The protein resides in the cytoplasm. The enzyme catalyses 5-[(5-phospho-1-deoxy-D-ribulos-1-ylimino)methylamino]-1-(5-phospho-beta-D-ribosyl)imidazole-4-carboxamide + L-glutamine = D-erythro-1-(imidazol-4-yl)glycerol 3-phosphate + 5-amino-1-(5-phospho-beta-D-ribosyl)imidazole-4-carboxamide + L-glutamate + H(+). The protein operates within amino-acid biosynthesis; L-histidine biosynthesis; L-histidine from 5-phospho-alpha-D-ribose 1-diphosphate: step 5/9. Functionally, IGPS catalyzes the conversion of PRFAR and glutamine to IGP, AICAR and glutamate. The HisF subunit catalyzes the cyclization activity that produces IGP and AICAR from PRFAR using the ammonia provided by the HisH subunit. This Neisseria gonorrhoeae (strain ATCC 700825 / FA 1090) protein is Imidazole glycerol phosphate synthase subunit HisF.